A 251-amino-acid chain; its full sequence is Probable metal-binding protein YrpE (251 aa).

The signal sequence occupies residues 1-30 (MNILFSKRLGILTIGSLLVLAGCQTSGSSA). Over residues 25–41 (TSGSSAGESNQTTSSSA) the composition is skewed to polar residues. The tract at residues 25-72 (TSGSSAGESNQTTSSSAVEEDSSKTQEQTSDSHTHEHSHDHSHAHDEE) is disordered. The segment covering 54 to 72 (SDSHTHEHSHDHSHAHDEE) has biased composition (basic and acidic residues). Residues His203, His212, His214, Glu247, and His251 each coordinate Zn(2+).

This sequence belongs to the calycin superfamily. ZinT family.

The protein is Probable metal-binding protein YrpE (yrpE) of Bacillus subtilis (strain 168).